Here is a 288-residue protein sequence, read N- to C-terminus: 4-hydroxybenzoate octaprenyltransferase (288 aa).

The next 6 membrane-spanning stretches (helical) occupy residues 33–53, 99–119, 163–183, 213–233, 234–254, and 268–288; these read LWALWVASPGVPPLWILAVFV, LFIVLVLLSFLLVLTLNTMTI, ESLPLSCWLMFLANILWAVAY, LIIGILQVAVLALMGAVGWLN, GLGWEYYWSLFVAAGLFGWQQ, and AFMNNNYVGLVLFLGLAMSYL.

The protein belongs to the UbiA prenyltransferase family. The cofactor is Mg(2+).

Its subcellular location is the cell inner membrane. It carries out the reaction all-trans-octaprenyl diphosphate + 4-hydroxybenzoate = 4-hydroxy-3-(all-trans-octaprenyl)benzoate + diphosphate. It participates in cofactor biosynthesis; ubiquinone biosynthesis. In terms of biological role, catalyzes the prenylation of para-hydroxybenzoate (PHB) with an all-trans polyprenyl group. Mediates the second step in the final reaction sequence of ubiquinone-8 (UQ-8) biosynthesis, which is the condensation of the polyisoprenoid side chain with PHB, generating the first membrane-bound Q intermediate 3-octaprenyl-4-hydroxybenzoate. The polypeptide is 4-hydroxybenzoate octaprenyltransferase (Klebsiella pneumoniae subsp. pneumoniae (strain ATCC 700721 / MGH 78578)).